A 256-amino-acid polypeptide reads, in one-letter code: NH(3)-dependent NAD(+) synthetase (256 aa).

29-36 (GISGGIDS) contacts ATP. Asp-35 contacts Mg(2+). Deamido-NAD(+) is bound at residue Arg-115. Thr-135 is a binding site for ATP. Glu-140 is a binding site for Mg(2+). Deamido-NAD(+) is bound by residues Lys-148 and Asp-155. The ATP site is built by Lys-164 and Ser-186. 245–246 (HK) lines the deamido-NAD(+) pocket.

Belongs to the NAD synthetase family. As to quaternary structure, homodimer.

It carries out the reaction deamido-NAD(+) + NH4(+) + ATP = AMP + diphosphate + NAD(+) + H(+). It participates in cofactor biosynthesis; NAD(+) biosynthesis; NAD(+) from deamido-NAD(+) (ammonia route): step 1/1. Catalyzes the ATP-dependent amidation of deamido-NAD to form NAD. Uses ammonia as a nitrogen source. In Methanosarcina acetivorans (strain ATCC 35395 / DSM 2834 / JCM 12185 / C2A), this protein is NH(3)-dependent NAD(+) synthetase.